The sequence spans 366 residues: Ribosomal RNA small subunit methyltransferase H 1 (366 aa).

The segment at 1 to 46 (MADQNINKNEKVLTGQPTENQEPVHKRRERYKGTHPKTFKEKYKER) is disordered. Over residues 25–37 (HKRRERYKGTHPK) the composition is skewed to basic residues. Residues 97–99 (GGH), D117, F147, D166, and Q173 contribute to the S-adenosyl-L-methionine site.

It belongs to the methyltransferase superfamily. RsmH family.

The protein localises to the cytoplasm. It catalyses the reaction cytidine(1402) in 16S rRNA + S-adenosyl-L-methionine = N(4)-methylcytidine(1402) in 16S rRNA + S-adenosyl-L-homocysteine + H(+). In terms of biological role, specifically methylates the N4 position of cytidine in position 1402 (C1402) of 16S rRNA. The polypeptide is Ribosomal RNA small subunit methyltransferase H 1 (Lachnoclostridium phytofermentans (strain ATCC 700394 / DSM 18823 / ISDg) (Clostridium phytofermentans)).